Reading from the N-terminus, the 71-residue chain is Small ribosomal subunit protein bS21 (71 aa).

Residues 48–60 show a composition bias toward basic residues; that stretch reads KKAAAVKRYKKKL. A disordered region spans residues 48–71; the sequence is KKAAAVKRYKKKLQRESIRTTRMY. The span at 61–71 shows a compositional bias: basic and acidic residues; that stretch reads QRESIRTTRMY.

The protein belongs to the bacterial ribosomal protein bS21 family.

This chain is Small ribosomal subunit protein bS21, found in Psychrobacter sp. (strain PRwf-1).